Consider the following 599-residue polypeptide: Sulfite reductase [NADPH] flavoprotein alpha-component (599 aa).

The Flavodoxin-like domain occupies 64 to 202 (ITLISASQTG…VAAQWRARIV (139 aa)). FMN is bound by residues 70 to 75 (SQTGNA), 117 to 120 (STQG), and 153 to 162 (LGDTSYEFFC). The region spanning 234-448 (EAPLRASLSV…IEHNDNFRLP (215 aa)) is the FAD-binding FR-type domain. FAD contacts are provided by residues Thr-322, Ala-356, 386-389 (RLYS), 404-406 (TVG), Tyr-410, and 419-422 (GGAS). NADP(+) is bound by residues 519-520 (SR), 525-529 (KIYVQ), and Asp-561. Tyr-599 serves as a coordination point for FAD.

This sequence belongs to the NADPH-dependent sulphite reductase flavoprotein subunit CysJ family. The protein in the N-terminal section; belongs to the flavodoxin family. It in the C-terminal section; belongs to the flavoprotein pyridine nucleotide cytochrome reductase family. In terms of assembly, alpha(8)-beta(8). The alpha component is a flavoprotein, the beta component is a hemoprotein. FAD serves as cofactor. The cofactor is FMN.

It catalyses the reaction hydrogen sulfide + 3 NADP(+) + 3 H2O = sulfite + 3 NADPH + 4 H(+). It participates in sulfur metabolism; hydrogen sulfide biosynthesis; hydrogen sulfide from sulfite (NADPH route): step 1/1. Its function is as follows. Component of the sulfite reductase complex that catalyzes the 6-electron reduction of sulfite to sulfide. This is one of several activities required for the biosynthesis of L-cysteine from sulfate. The flavoprotein component catalyzes the electron flow from NADPH -&gt; FAD -&gt; FMN to the hemoprotein component. The sequence is that of Sulfite reductase [NADPH] flavoprotein alpha-component from Salmonella arizonae (strain ATCC BAA-731 / CDC346-86 / RSK2980).